A 181-amino-acid polypeptide reads, in one-letter code: Probable cobalt-precorrin-6B C(15)-methyltransferase (decarboxylating) (181 aa).

S-adenosyl-L-methionine is bound by residues threonine 16, 40 to 44 (GCGSG), aspartate 61, and alanine 89.

It belongs to the methyltransferase superfamily. Archaeal-type CbiT family.

The enzyme catalyses Co-precorrin-6B + S-adenosyl-L-methionine = Co-precorrin-7 + S-adenosyl-L-homocysteine + CO2. The protein operates within cofactor biosynthesis; adenosylcobalamin biosynthesis; cob(II)yrinate a,c-diamide from sirohydrochlorin (anaerobic route): step 8/10. Its function is as follows. Catalyzes the methylation of C-15 in cobalt-precorrin-6B followed by the decarboxylation of C-12 to form cobalt-precorrin-7. This chain is Probable cobalt-precorrin-6B C(15)-methyltransferase (decarboxylating), found in Methanococcus maripaludis (strain DSM 14266 / JCM 13030 / NBRC 101832 / S2 / LL).